A 276-amino-acid chain; its full sequence is Probable endonuclease 4 (276 aa).

Zn(2+) contacts are provided by H66, H106, E141, D175, H178, H210, D223, H225, and E255.

It belongs to the AP endonuclease 2 family. Requires Zn(2+) as cofactor.

The catalysed reaction is Endonucleolytic cleavage to 5'-phosphooligonucleotide end-products.. Endonuclease IV plays a role in DNA repair. It cleaves phosphodiester bonds at apurinic or apyrimidinic (AP) sites, generating a 3'-hydroxyl group and a 5'-terminal sugar phosphate. The sequence is that of Probable endonuclease 4 from Heliobacterium modesticaldum (strain ATCC 51547 / Ice1).